The chain runs to 260 residues: UPF0246 protein Bxeno_A1262 (260 aa).

It belongs to the UPF0246 family.

In Paraburkholderia xenovorans (strain LB400), this protein is UPF0246 protein Bxeno_A1262.